The primary structure comprises 324 residues: Delta-aminolevulinic acid dehydratase (324 aa).

3 residues coordinate Zn(2+): cysteine 120, cysteine 122, and cysteine 130. The active-site Schiff-base intermediate with substrate is lysine 195. Arginine 205 and arginine 217 together coordinate 5-aminolevulinate. Glutamate 233 is a binding site for Mg(2+). Lysine 248 serves as the catalytic Schiff-base intermediate with substrate. Serine 274 and tyrosine 313 together coordinate 5-aminolevulinate.

This sequence belongs to the ALAD family. As to quaternary structure, homooctamer. Zn(2+) is required as a cofactor.

The catalysed reaction is 2 5-aminolevulinate = porphobilinogen + 2 H2O + H(+). It participates in porphyrin-containing compound metabolism; protoporphyrin-IX biosynthesis; coproporphyrinogen-III from 5-aminolevulinate: step 1/4. In terms of biological role, catalyzes an early step in the biosynthesis of tetrapyrroles. Binds two molecules of 5-aminolevulinate per subunit, each at a distinct site, and catalyzes their condensation to form porphobilinogen. The sequence is that of Delta-aminolevulinic acid dehydratase (hemB) from Bacillus subtilis (strain 168).